A 157-amino-acid chain; its full sequence is C-type lectin 9a (157 aa).

Residues 1 to 23 (MGRFIFVSFGLLVVFLSLSGTGA) form the signal peptide. Cystine bridges form between cysteine 27–cysteine 38, cysteine 55–cysteine 151, and cysteine 126–cysteine 143. The C-type lectin domain occupies 34-152 (YDQYCYKPFN…CQAKKPFVCK (119 aa)).

It belongs to the snaclec family. In terms of assembly, heteromultimer; disulfide-linked. Expressed by the venom gland.

The protein localises to the secreted. In terms of biological role, interferes with one step of hemostasis (modulation of platelet aggregation, or coagulation cascade, for example). In Crotalus adamanteus (Eastern diamondback rattlesnake), this protein is C-type lectin 9a.